The chain runs to 208 residues: Protein-methionine-sulfoxide reductase heme-binding subunit MsrQ (208 aa).

The next 6 membrane-spanning stretches (helical) occupy residues 16–36 (IAVF…FVGG), 53–73 (WGLI…LWGW), 82–102 (MVGL…IGLD), 118–138 (TYIT…VTST), 156–176 (LVYP…KADL), and 178–198 (EPLI…VPAV).

The protein belongs to the MsrQ family. Heterodimer of a catalytic subunit (MsrP) and a heme-binding subunit (MsrQ). The cofactor is FMN. Heme b is required as a cofactor.

It localises to the cell inner membrane. Functionally, part of the MsrPQ system that repairs oxidized periplasmic proteins containing methionine sulfoxide residues (Met-O), using respiratory chain electrons. Thus protects these proteins from oxidative-stress damage caused by reactive species of oxygen and chlorine generated by the host defense mechanisms. MsrPQ is essential for the maintenance of envelope integrity under bleach stress, rescuing a wide series of structurally unrelated periplasmic proteins from methionine oxidation. MsrQ provides electrons for reduction to the reductase catalytic subunit MsrP, using the quinone pool of the respiratory chain. The chain is Protein-methionine-sulfoxide reductase heme-binding subunit MsrQ from Rhodospirillum rubrum (strain ATCC 11170 / ATH 1.1.1 / DSM 467 / LMG 4362 / NCIMB 8255 / S1).